Reading from the N-terminus, the 543-residue chain is CTP synthase (543 aa).

The segment at 1 to 265 (MTRFIFVTGG…DQIVLDKFGL (265 aa)) is amidoligase domain. Ser13 contributes to the CTP binding site. Ser13 serves as a coordination point for UTP. ATP is bound by residues 14–19 (SLGKGI) and Asp71. Positions 71 and 139 each coordinate Mg(2+). Residues 146–148 (DIE), 186–191 (KTKPTQ), and Lys222 each bind CTP. Residues 186–191 (KTKPTQ) and Lys222 each bind UTP. Positions 290 to 541 (TIAMVGKYMD…IQAAVEQNER (252 aa)) constitute a Glutamine amidotransferase type-1 domain. Gly351 provides a ligand contact to L-glutamine. Cys378 acts as the Nucleophile; for glutamine hydrolysis in catalysis. Residues 379 to 382 (LGMQ), Glu402, and Arg469 each bind L-glutamine. Active-site residues include His514 and Glu516.

This sequence belongs to the CTP synthase family. As to quaternary structure, homotetramer.

The catalysed reaction is UTP + L-glutamine + ATP + H2O = CTP + L-glutamate + ADP + phosphate + 2 H(+). It carries out the reaction L-glutamine + H2O = L-glutamate + NH4(+). The enzyme catalyses UTP + NH4(+) + ATP = CTP + ADP + phosphate + 2 H(+). It functions in the pathway pyrimidine metabolism; CTP biosynthesis via de novo pathway; CTP from UDP: step 2/2. Allosterically activated by GTP, when glutamine is the substrate; GTP has no effect on the reaction when ammonia is the substrate. The allosteric effector GTP functions by stabilizing the protein conformation that binds the tetrahedral intermediate(s) formed during glutamine hydrolysis. Inhibited by the product CTP, via allosteric rather than competitive inhibition. In terms of biological role, catalyzes the ATP-dependent amination of UTP to CTP with either L-glutamine or ammonia as the source of nitrogen. Regulates intracellular CTP levels through interactions with the four ribonucleotide triphosphates. In Saccharophagus degradans (strain 2-40 / ATCC 43961 / DSM 17024), this protein is CTP synthase.